Consider the following 146-residue polypeptide: UPF0178 protein LMOf2365_1475 (146 aa).

The protein belongs to the UPF0178 family.

The chain is UPF0178 protein LMOf2365_1475 from Listeria monocytogenes serotype 4b (strain F2365).